The sequence spans 295 residues: 4-hydroxy-tetrahydrodipicolinate synthase (295 aa).

Residue T48 coordinates pyruvate. Y136 (proton donor/acceptor) is an active-site residue. Catalysis depends on K164, which acts as the Schiff-base intermediate with substrate. Position 206 (I206) interacts with pyruvate.

The protein belongs to the DapA family. In terms of assembly, homotetramer; dimer of dimers.

It is found in the cytoplasm. It carries out the reaction L-aspartate 4-semialdehyde + pyruvate = (2S,4S)-4-hydroxy-2,3,4,5-tetrahydrodipicolinate + H2O + H(+). It functions in the pathway amino-acid biosynthesis; L-lysine biosynthesis via DAP pathway; (S)-tetrahydrodipicolinate from L-aspartate: step 3/4. Catalyzes the condensation of (S)-aspartate-beta-semialdehyde [(S)-ASA] and pyruvate to 4-hydroxy-tetrahydrodipicolinate (HTPA). The sequence is that of 4-hydroxy-tetrahydrodipicolinate synthase from Actinobacillus pleuropneumoniae serotype 7 (strain AP76).